Consider the following 82-residue polypeptide: Small ribosomal subunit protein uS17 (82 aa).

It belongs to the universal ribosomal protein uS17 family. In terms of assembly, part of the 30S ribosomal subunit.

Its function is as follows. One of the primary rRNA binding proteins, it binds specifically to the 5'-end of 16S ribosomal RNA. This chain is Small ribosomal subunit protein uS17, found in Xanthobacter autotrophicus (strain ATCC BAA-1158 / Py2).